Here is a 674-residue protein sequence, read N- to C-terminus: Translation initiation factor IF-2 (674 aa).

Residues 174–344 (IRPPVVTVMG…LLVAELREIK (171 aa)) enclose the tr-type G domain. The segment at 183–190 (GHVDHGKT) is G1. Residue 183-190 (GHVDHGKT) participates in GTP binding. Residues 208-212 (GITQS) form a G2 region. Residues 229-232 (DTPG) form a G3 region. GTP is bound by residues 229 to 233 (DTPGH) and 283 to 286 (NKID). The tract at residues 283–286 (NKID) is G4. The interval 320–322 (SAR) is G5.

It belongs to the TRAFAC class translation factor GTPase superfamily. Classic translation factor GTPase family. IF-2 subfamily.

The protein localises to the cytoplasm. One of the essential components for the initiation of protein synthesis. Protects formylmethionyl-tRNA from spontaneous hydrolysis and promotes its binding to the 30S ribosomal subunits. Also involved in the hydrolysis of GTP during the formation of the 70S ribosomal complex. The protein is Translation initiation factor IF-2 of Pseudothermotoga lettingae (strain ATCC BAA-301 / DSM 14385 / NBRC 107922 / TMO) (Thermotoga lettingae).